The primary structure comprises 261 residues: Kallikrein-1E2 (261 aa).

The first 17 residues, 1-17 (MWFLVLCLDLSLGETGA), serve as a signal peptide directing secretion. The propeptide at 18-24 (LPPIQSR) is activation peptide. Positions 25 to 258 (IIGGWECEKH…HLKWIKETIE (234 aa)) constitute a Peptidase S1 domain. Cystine bridges form between Cys31–Cys173, Cys50–Cys66, Cys152–Cys219, Cys184–Cys198, and Cys209–Cys234. The active-site Charge relay system is the His65. An N-linked (GlcNAc...) asparagine glycan is attached at Asn79. The active-site Charge relay system is the Asp120. The Charge relay system role is filled by Ser213.

This sequence belongs to the peptidase S1 family. Kallikrein subfamily. In terms of tissue distribution, detected in prostate and semen.

It localises to the secreted. The enzyme catalyses Preferential cleavage of Arg-|-Xaa bonds in small molecule substrates. Highly selective action to release kallidin (lysyl-bradykinin) from kininogen involves hydrolysis of Met-|-Xaa or Leu-|-Xaa.. Glandular kallikreins cleave Met-Lys and Arg-Ser bonds in kininogen to release Lys-bradykinin. In Equus caballus (Horse), this protein is Kallikrein-1E2 (KLK1E2).